The sequence spans 255 residues: tRNA1(Val) (adenine(37)-N6)-methyltransferase (255 aa).

The protein belongs to the methyltransferase superfamily. tRNA (adenine-N(6)-)-methyltransferase family.

It localises to the cytoplasm. It carries out the reaction adenosine(37) in tRNA1(Val) + S-adenosyl-L-methionine = N(6)-methyladenosine(37) in tRNA1(Val) + S-adenosyl-L-homocysteine + H(+). Functionally, specifically methylates the adenine in position 37 of tRNA(1)(Val) (anticodon cmo5UAC). The protein is tRNA1(Val) (adenine(37)-N6)-methyltransferase of Porphyromonas gingivalis (strain ATCC BAA-308 / W83).